A 132-amino-acid polypeptide reads, in one-letter code: Riboflavin kinase (132 aa).

Residue glycine 13 to serine 18 participates in CDP binding. The Mg(2+) site is built by threonine 40 and asparagine 42. FMN is bound by residues threonine 98 and glutamate 106. Residue valine 111–arginine 114 participates in CDP binding.

It belongs to the archaeal riboflavin kinase family. Requires Mg(2+) as cofactor.

The enzyme catalyses riboflavin + CTP = CDP + FMN + H(+). The protein operates within cofactor biosynthesis; FMN biosynthesis; FMN from riboflavin (CTP route): step 1/1. Its function is as follows. Catalyzes the CTP-dependent phosphorylation of riboflavin (vitamin B2) to form flavin mononucleotide (FMN). This Aeropyrum pernix (strain ATCC 700893 / DSM 11879 / JCM 9820 / NBRC 100138 / K1) protein is Riboflavin kinase.